Reading from the N-terminus, the 283-residue chain is Thymidylate synthase (283 aa).

Position 22 (arginine 22) interacts with dUMP. Cysteine 160 acts as the Nucleophile in catalysis. Residues 180–183 (RSCD), asparagine 191, and 221–223 (HIY) contribute to the dUMP site. Aspartate 183 contacts (6R)-5,10-methylene-5,6,7,8-tetrahydrofolate. Serine 282 is a binding site for (6R)-5,10-methylene-5,6,7,8-tetrahydrofolate.

Belongs to the thymidylate synthase family. Bacterial-type ThyA subfamily. Homodimer.

The protein resides in the cytoplasm. The catalysed reaction is dUMP + (6R)-5,10-methylene-5,6,7,8-tetrahydrofolate = 7,8-dihydrofolate + dTMP. It participates in pyrimidine metabolism; dTTP biosynthesis. In terms of biological role, catalyzes the reductive methylation of 2'-deoxyuridine-5'-monophosphate (dUMP) to 2'-deoxythymidine-5'-monophosphate (dTMP) while utilizing 5,10-methylenetetrahydrofolate (mTHF) as the methyl donor and reductant in the reaction, yielding dihydrofolate (DHF) as a by-product. This enzymatic reaction provides an intracellular de novo source of dTMP, an essential precursor for DNA biosynthesis. In Mannheimia succiniciproducens (strain KCTC 0769BP / MBEL55E), this protein is Thymidylate synthase.